Here is a 137-residue protein sequence, read N- to C-terminus: Integration host factor subunit beta (137 aa).

Residues 75–92 are compositionally biased toward basic and acidic residues; the sequence is KRVPHFKAGKELRERVDR. Positions 75-137 are disordered; the sequence is KRVPHFKAGK…EGGGLNLARS (63 aa). The span at 128–137 shows a compositional bias: gly residues; sequence EGGGLNLARS.

The protein belongs to the bacterial histone-like protein family. As to quaternary structure, heterodimer of an alpha and a beta chain.

In terms of biological role, this protein is one of the two subunits of integration host factor, a specific DNA-binding protein that functions in genetic recombination as well as in transcriptional and translational control. The polypeptide is Integration host factor subunit beta (Cupriavidus pinatubonensis (strain JMP 134 / LMG 1197) (Cupriavidus necator (strain JMP 134))).